A 356-amino-acid polypeptide reads, in one-letter code: Tyrosine recombinase XerS (356 aa).

The 106-residue stretch at 16–121 (LMPWYVLEYY…ALSSLYKYLT (106 aa)) folds into the Core-binding (CB) domain. The Tyr recombinase domain occupies 169 to 354 (GFLTYIDQEH…VNDEQKNALD (186 aa)). Active-site residues include Arg-210, Lys-234, His-306, Arg-309, and His-332. Tyr-341 functions as the O-(3'-phospho-DNA)-tyrosine intermediate in the catalytic mechanism.

This sequence belongs to the 'phage' integrase family. XerS subfamily.

The protein localises to the cytoplasm. Its activity is regulated as follows. FtsK is required for recombination. Site-specific tyrosine recombinase, which acts by catalyzing the cutting and rejoining of the recombining DNA molecules. Essential to convert dimers of the bacterial chromosome into monomers to permit their segregation at cell division. The chain is Tyrosine recombinase XerS from Streptococcus pneumoniae (strain P1031).